Consider the following 141-residue polypeptide: Nucleoside diphosphate kinase (141 aa).

ATP is bound by residues K11, F59, R87, T93, R104, and N114. The active-site Pros-phosphohistidine intermediate is the H117.

Belongs to the NDK family. In terms of assembly, homotetramer. Requires Mg(2+) as cofactor.

Its subcellular location is the cytoplasm. The enzyme catalyses a 2'-deoxyribonucleoside 5'-diphosphate + ATP = a 2'-deoxyribonucleoside 5'-triphosphate + ADP. The catalysed reaction is a ribonucleoside 5'-diphosphate + ATP = a ribonucleoside 5'-triphosphate + ADP. Major role in the synthesis of nucleoside triphosphates other than ATP. The ATP gamma phosphate is transferred to the NDP beta phosphate via a ping-pong mechanism, using a phosphorylated active-site intermediate. The chain is Nucleoside diphosphate kinase from Burkholderia ambifaria (strain MC40-6).